Reading from the N-terminus, the 202-residue chain is GTP cyclohydrolase 1 (202 aa).

Positions 90, 93, and 163 each coordinate Zn(2+).

It belongs to the GTP cyclohydrolase I family. Homomer.

The catalysed reaction is GTP + H2O = 7,8-dihydroneopterin 3'-triphosphate + formate + H(+). The protein operates within cofactor biosynthesis; 7,8-dihydroneopterin triphosphate biosynthesis; 7,8-dihydroneopterin triphosphate from GTP: step 1/1. This chain is GTP cyclohydrolase 1, found in Mycolicibacterium gilvum (strain PYR-GCK) (Mycobacterium gilvum (strain PYR-GCK)).